Here is a 144-residue protein sequence, read N- to C-terminus: Prefoldin subunit alpha (144 aa).

The protein belongs to the prefoldin alpha subunit family. As to quaternary structure, heterohexamer of two alpha and four beta subunits.

It is found in the cytoplasm. Functionally, molecular chaperone capable of stabilizing a range of proteins. Seems to fulfill an ATP-independent, HSP70-like function in archaeal de novo protein folding. This chain is Prefoldin subunit alpha, found in Methanococcus maripaludis (strain C7 / ATCC BAA-1331).